Here is a 774-residue protein sequence, read N- to C-terminus: Protein translocase subunit SecA 2 (774 aa).

ATP contacts are provided by residues Q94, 112-116 (GEGKT), and D501.

The protein belongs to the SecA family. As to quaternary structure, monomer and homodimer. Part of the essential Sec protein translocation apparatus which comprises SecA, SecYEG and auxiliary proteins SecDF. Other proteins may also be involved.

Its subcellular location is the cell membrane. It localises to the cytoplasm. It catalyses the reaction ATP + H2O + cellular proteinSide 1 = ADP + phosphate + cellular proteinSide 2.. In terms of biological role, part of the Sec protein translocase complex. Interacts with the SecYEG preprotein conducting channel. Has a central role in coupling the hydrolysis of ATP to the transfer of proteins into and across the cell membrane, serving as an ATP-driven molecular motor driving the stepwise translocation of polypeptide chains across the membrane. The protein is Protein translocase subunit SecA 2 of Mycobacterium sp. (strain JLS).